We begin with the raw amino-acid sequence, 230 residues long: KIFCFLMLLGLSASAATATIFPQCSQAPITSLLPPYLSPAVSSVCENPILQPYRIQQAIAAGILPLSPLFLQQPSALLQQLPLVHLLAQNIRAQQLQQLVLGNLAAYSQQHQFLPFNQLAALNSAAYLQQQLPFSQLAAAYPQQFLPFNQLAALNSAAYLQQQQLPPFSQLADVSPAAFLTQQQLLPFYLHAAPNAGTVLQLQQLLPFDQLALTNPTAFYQQPIIGGALF.

Positions 1-18 (KIFCFLMLLGLSASAATA) are cleaved as a signal peptide.

The protein belongs to the zein family.

In terms of biological role, zeins are major seed storage proteins. The chain is Zein-alpha 19A2 from Zea mays (Maize).